A 278-amino-acid polypeptide reads, in one-letter code: Diaminopimelate epimerase (278 aa).

Positions 13, 46, and 65 each coordinate substrate. The Proton donor role is filled by C74. Residues 75-76 (GN), N157, N190, and 208-209 (ER) contribute to the substrate site. C217 (proton acceptor) is an active-site residue. Residue 218–219 (GT) coordinates substrate.

It belongs to the diaminopimelate epimerase family. As to quaternary structure, homodimer.

It is found in the cytoplasm. It carries out the reaction (2S,6S)-2,6-diaminopimelate = meso-2,6-diaminopimelate. It participates in amino-acid biosynthesis; L-lysine biosynthesis via DAP pathway; DL-2,6-diaminopimelate from LL-2,6-diaminopimelate: step 1/1. Catalyzes the stereoinversion of LL-2,6-diaminopimelate (L,L-DAP) to meso-diaminopimelate (meso-DAP), a precursor of L-lysine and an essential component of the bacterial peptidoglycan. The polypeptide is Diaminopimelate epimerase (Magnetococcus marinus (strain ATCC BAA-1437 / JCM 17883 / MC-1)).